The primary structure comprises 249 residues: Proteasome subunit alpha type-7-B (249 aa).

It belongs to the peptidase T1A family. The 26S proteasome consists of a 20S proteasome core and two 19S regulatory subunits. The 20S proteasome core is composed of 28 subunits that are arranged in four stacked rings, resulting in a barrel-shaped structure. The two end rings are each formed by seven alpha subunits, and the two central rings are each formed by seven beta subunits. The catalytic chamber with the active sites is on the inside of the barrel.

The protein resides in the cytoplasm. Its subcellular location is the nucleus. The proteasome is a multicatalytic proteinase complex which is characterized by its ability to cleave peptides with Arg, Phe, Tyr, Leu, and Glu adjacent to the leaving group at neutral or slightly basic pH. The proteasome has an ATP-dependent proteolytic activity. This chain is Proteasome subunit alpha type-7-B (PAD1), found in Oryza sativa subsp. indica (Rice).